The following is a 652-amino-acid chain: Acetyl-coenzyme A synthetase (652 aa).

CoA is bound by residues 191–194, Thr-311, and Asn-335; that span reads RAGR. Residues 387–389, 411–416, Asp-500, and Arg-515 contribute to the ATP site; these read GEP and DTWWQT. Residue Ser-523 participates in CoA binding. Residue Arg-526 participates in ATP binding. The Mg(2+) site is built by Val-537, His-539, and Ile-542. CoA is bound at residue Arg-584. Lys-609 carries the post-translational modification N6-acetyllysine; by Pat.

Belongs to the ATP-dependent AMP-binding enzyme family. As to quaternary structure, monomer. Mg(2+) is required as a cofactor. Acetylated. Deacetylation by the SIR2-homolog deacetylase activates the enzyme.

The enzyme catalyses acetate + ATP + CoA = acetyl-CoA + AMP + diphosphate. In terms of biological role, catalyzes the conversion of acetate into acetyl-CoA (AcCoA), an essential intermediate at the junction of anabolic and catabolic pathways. Acs undergoes a two-step reaction. In the first half reaction, Acs combines acetate with ATP to form acetyl-adenylate (AcAMP) intermediate. In the second half reaction, it can then transfer the acetyl group from AcAMP to the sulfhydryl group of CoA, forming the product AcCoA. Required for acetate recapture but not for acetate excretion when this organism is grown on ethanolamine. Functionally, enables the cell to use acetate during aerobic growth to generate energy via the TCA cycle, and biosynthetic compounds via the glyoxylate shunt. Acetylates CheY, the response regulator involved in flagellar movement and chemotaxis. The polypeptide is Acetyl-coenzyme A synthetase (Salmonella typhimurium (strain LT2 / SGSC1412 / ATCC 700720)).